Reading from the N-terminus, the 187-residue chain is MQDPKETINIENVVASTGIGQELDLQSVAMDLEGADYDPEQFPGLVYRTQEPKSAALIFRSGKIVCTGAKSTDDVHESLRIVFDKLRDLEIQVDEDPEIVVQNIVTSADLGRNLNLNAIAIGLGLENIEYEPEQFPGLVYRLDDPDVVALLFGSGKLVITGGKEPDDAREAVDKIVSRLEELGLLDG.

2 consecutive repeat copies span residues 10 to 86 (IENV…FDKL) and 101 to 179 (VQNI…VSRL).

This sequence belongs to the TBP family.

Functionally, general factor that plays a role in the activation of archaeal genes transcribed by RNA polymerase. Binds specifically to the TATA box promoter element which lies close to the position of transcription initiation. This Natronomonas pharaonis (strain ATCC 35678 / DSM 2160 / CIP 103997 / JCM 8858 / NBRC 14720 / NCIMB 2260 / Gabara) (Halobacterium pharaonis) protein is TATA-box-binding protein.